Reading from the N-terminus, the 361-residue chain is Phospho-N-acetylmuramoyl-pentapeptide-transferase (361 aa).

The next 10 helical transmembrane spans lie at 27–47, 72–92, 94–114, 133–153, 169–189, 200–220, 240–260, 264–284, 289–309, and 338–358; these read GAMV…IDHL, TPTM…LLWA, LHNP…FVGF, LRLA…IWAG, FAIN…VGAG, GLAI…AYLV, LAVL…FNAP, IFMG…IAVA, IVLA…IVQV, and QIVI…LSTL.

It belongs to the glycosyltransferase 4 family. MraY subfamily. Requires Mg(2+) as cofactor.

It is found in the cell inner membrane. It carries out the reaction UDP-N-acetyl-alpha-D-muramoyl-L-alanyl-gamma-D-glutamyl-meso-2,6-diaminopimeloyl-D-alanyl-D-alanine + di-trans,octa-cis-undecaprenyl phosphate = di-trans,octa-cis-undecaprenyl diphospho-N-acetyl-alpha-D-muramoyl-L-alanyl-D-glutamyl-meso-2,6-diaminopimeloyl-D-alanyl-D-alanine + UMP. It functions in the pathway cell wall biogenesis; peptidoglycan biosynthesis. Functionally, catalyzes the initial step of the lipid cycle reactions in the biosynthesis of the cell wall peptidoglycan: transfers peptidoglycan precursor phospho-MurNAc-pentapeptide from UDP-MurNAc-pentapeptide onto the lipid carrier undecaprenyl phosphate, yielding undecaprenyl-pyrophosphoryl-MurNAc-pentapeptide, known as lipid I. This chain is Phospho-N-acetylmuramoyl-pentapeptide-transferase, found in Afipia carboxidovorans (strain ATCC 49405 / DSM 1227 / KCTC 32145 / OM5) (Oligotropha carboxidovorans).